The following is an 818-amino-acid chain: Glycerol-3-phosphate acyltransferase (818 aa).

The HXXXXD motif signature appears at 305-310 (CHRSHM).

It belongs to the GPAT/DAPAT family.

It is found in the cell inner membrane. The enzyme catalyses sn-glycerol 3-phosphate + an acyl-CoA = a 1-acyl-sn-glycero-3-phosphate + CoA. The protein operates within phospholipid metabolism; CDP-diacylglycerol biosynthesis; CDP-diacylglycerol from sn-glycerol 3-phosphate: step 1/3. This chain is Glycerol-3-phosphate acyltransferase, found in Edwardsiella ictaluri (strain 93-146).